We begin with the raw amino-acid sequence, 431 residues long: MLDPKYLRSEIDEAAARLATRGYVLDVAAVNALEEKRKDLQSRTQELQAERNARSKSIGEAARRGEDVAPLKAEVTKINDELETSKIELDALLTEIKSISDAIPNLPSETTPVGRDENDNVEVRRWGTPRQFTFPVRDHIDLGEAAKGVDFKNGVKLSGARFVVMKGQIARLHRALAQFMLDLHTLQHGYTECYVPYLVNPDSLYGTGQLPKFSQDLFNTGIEGEGEDEGKMRKFSLIPTSEVPLTNMARDEIFDEQELPIKMTAHSPCFRSEAGSYGRDTRGLIRMHQFDKVEMVQLVHPEKSWEALEEMAGHAEKVLQLLELPYRVMALATGDMGFCAAKTYDLEVWLPAQNTYREISSVSNCTDFQARRMQARVRIDGKPQLLHTLNGSGLAVGRTLVAVIENYQQEDGRIAIPAALQSYMGGLTHIG.

A disordered region spans residues 41 to 66 (QSRTQELQAERNARSKSIGEAARRGE). 240-242 (TSE) provides a ligand contact to L-serine. 271–273 (RSE) is a binding site for ATP. E294 serves as a coordination point for L-serine. 358-361 (EISS) lines the ATP pocket. S392 contributes to the L-serine binding site.

The protein belongs to the class-II aminoacyl-tRNA synthetase family. Type-1 seryl-tRNA synthetase subfamily. In terms of assembly, homodimer. The tRNA molecule binds across the dimer.

It is found in the cytoplasm. The catalysed reaction is tRNA(Ser) + L-serine + ATP = L-seryl-tRNA(Ser) + AMP + diphosphate + H(+). It catalyses the reaction tRNA(Sec) + L-serine + ATP = L-seryl-tRNA(Sec) + AMP + diphosphate + H(+). It functions in the pathway aminoacyl-tRNA biosynthesis; selenocysteinyl-tRNA(Sec) biosynthesis; L-seryl-tRNA(Sec) from L-serine and tRNA(Sec): step 1/1. In terms of biological role, catalyzes the attachment of serine to tRNA(Ser). Is also able to aminoacylate tRNA(Sec) with serine, to form the misacylated tRNA L-seryl-tRNA(Sec), which will be further converted into selenocysteinyl-tRNA(Sec). The chain is Serine--tRNA ligase from Aeromonas salmonicida (strain A449).